A 72-amino-acid chain; its full sequence is Alpha-mammal toxin Bot3 (72 aa).

The signal sequence occupies residues 1 to 8 (LVMAGVES). The LCN-type CS-alpha/beta domain occupies 10–72 (KDGYIVDDRN…VRTKGPGRCN (63 aa)). 4 disulfides stabilise this stretch: C20–C71, C24–C44, C30–C54, and C34–C56. Asparagine amide is present on N72.

This sequence belongs to the long (4 C-C) scorpion toxin superfamily. Sodium channel inhibitor family. Alpha subfamily. In terms of processing, when the toxin is not amidated, there are 75% loss of toxicity to mice, and total incapacity to bind rat brain synaptosomes. As to expression, expressed by the venom gland.

It localises to the secreted. Functionally, alpha toxins bind voltage-independently at site-3 of sodium channels (Nav) and inhibit the inactivation of the activated channels, thereby blocking neuronal transmission. Is active against mammals and binds with high affinity to rat brain synaptosomes. The protein is Alpha-mammal toxin Bot3 of Buthus occitanus tunetanus (Common European scorpion).